Reading from the N-terminus, the 581-residue chain is ATP-dependent lipid A-core flippase (581 aa).

Transmembrane regions (helical) follow at residues 21–41, 65–85, 138–158, 161–181, 246–266, and 271–291; these read TVAI…ALFI, FVVI…SYCL, ALLI…VMFY, WQLS…VTVV, LSVS…LWVV, and MIDT…MMLL. An ABC transmembrane type-1 domain is found at 24–306; the sequence is IVAIIGMIGY…LANVNSDMQR (283 aa). Positions 338–575 constitute an ABC transporter domain; sequence IEVKNVTFKY…NGTYSALCKM (238 aa). ATP is bound at residue 372 to 379; the sequence is GRSGSGKS.

Belongs to the ABC transporter superfamily. Lipid exporter (TC 3.A.1.106) family. As to quaternary structure, homodimer.

Its subcellular location is the cell inner membrane. The catalysed reaction is ATP + H2O + lipid A-core oligosaccharideSide 1 = ADP + phosphate + lipid A-core oligosaccharideSide 2.. In terms of biological role, involved in lipopolysaccharide (LPS) biosynthesis. Translocates lipid A-core from the inner to the outer leaflet of the inner membrane. Transmembrane domains (TMD) form a pore in the inner membrane and the ATP-binding domain (NBD) is responsible for energy generation. This is ATP-dependent lipid A-core flippase from Pseudoalteromonas translucida (strain TAC 125).